We begin with the raw amino-acid sequence, 759 residues long: Protein MEI2-like 3 (759 aa).

RRM domains lie at 166–239 (RTLF…FSIP) and 251–324 (GTLV…HSRP).

Functionally, probable RNA-binding protein that plays a role in meiosis and vegetative growth. In Arabidopsis thaliana (Mouse-ear cress), this protein is Protein MEI2-like 3 (ML3).